The chain runs to 186 residues: Large ribosomal subunit protein uL10 (186 aa).

In terms of assembly, part of the ribosomal stalk of the 50S ribosomal subunit. The N-terminus interacts with L11 and the large rRNA to form the base of the stalk. The C-terminus forms an elongated spine to which L12 dimers bind in a sequential fashion forming a multimeric L10(L12)X complex.

Functionally, forms part of the ribosomal stalk, playing a central role in the interaction of the ribosome with GTP-bound translation factors. The chain is Large ribosomal subunit protein uL10 from Rhodopseudomonas palustris (strain ATCC BAA-98 / CGA009).